A 306-amino-acid polypeptide reads, in one-letter code: Palmitoyl-protein thioesterase 1 (306 aa).

An N-terminal signal peptide occupies residues Met1–Leu27. Disulfide bonds link Cys45–Cys46, Cys96–Cys128, and Cys152–Cys160. Ser115 is a catalytic residue. 3 N-linked (GlcNAc...) asparagine glycosylation sites follow: Asn197, Asn212, and Asn232. Active-site residues include Asp233 and His289.

The protein belongs to the palmitoyl-protein thioesterase family. In terms of assembly, interacts with CLN5, ATP5F1A and ATP5F1B. In terms of processing, glycosylated.

Its subcellular location is the lysosome. It localises to the secreted. It is found in the golgi apparatus. The protein resides in the endoplasmic reticulum. It carries out the reaction S-hexadecanoyl-L-cysteinyl-[protein] + H2O = L-cysteinyl-[protein] + hexadecanoate + H(+). The enzyme catalyses hexadecanoyl-CoA + H2O = hexadecanoate + CoA + H(+). The catalysed reaction is S-hexadecanoyl-N-acetylcysteamine + H2O = N-acetylcysteamine + hexadecanoate + H(+). It catalyses the reaction S-hexadecanoyl-N-acetylcysteine methyl ester + H2O = N-acetylcysteine methyl ester + hexadecanoate + H(+). Its activity is regulated as follows. Palmitoylation reduces PPT1 enzymatic activity. Functionally, has thioesterase activity against fatty acid thioesters with 14 -18 carbons, including palmitoyl-CoA, S-palmitoyl-N-acetylcysteamine, and palmitoylated proteins. In contrast to PPT2, PPT1 can hydrolyze palmitoylated proteins and palmitoylcysteine. The sequence is that of Palmitoyl-protein thioesterase 1 (PPT1) from Macaca fascicularis (Crab-eating macaque).